The chain runs to 401 residues: Probable aspartic-type endopeptidase TRV_05382 (401 aa).

Residues 1–22 (MWHSPFFTAFTLFLGFFTLTLA) form the signal peptide. N80 and N102 each carry an N-linked (GlcNAc...) asparagine glycan. Residues 94–398 (FVNEITIGNN…DHDGPKMGFA (305 aa)) form the Peptidase A1 domain. D110 is an active-site residue. An N-linked (GlcNAc...) asparagine glycan is attached at N282. Residue D292 is part of the active site. The N-linked (GlcNAc...) asparagine glycan is linked to N329.

Belongs to the peptidase A1 family.

Its subcellular location is the secreted. Its function is as follows. Probable aspartic-type endopeptidase which contributes to virulence. The sequence is that of Probable aspartic-type endopeptidase TRV_05382 from Trichophyton verrucosum (strain HKI 0517).